A 174-amino-acid polypeptide reads, in one-letter code: Transcriptional repressor NrdR (174 aa).

The segment at 3–34 (CPFCQHSDTRVIDSRVSEDGTTIRRRRECEAC) is a zinc-finger region. An ATP-cone domain is found at 49-139 (PTVVKSDGGR…VYRSFQDVAD (91 aa)).

This sequence belongs to the NrdR family. Zn(2+) is required as a cofactor.

Functionally, negatively regulates transcription of bacterial ribonucleotide reductase nrd genes and operons by binding to NrdR-boxes. This is Transcriptional repressor NrdR from Xanthomonas oryzae pv. oryzae (strain MAFF 311018).